We begin with the raw amino-acid sequence, 864 residues long: Translation initiation factor IF-2 (864 aa).

The segment covering 140–171 (DSRSLNTKKENKLKISNKDEQNKKFNQHRESN) has biased composition (basic and acidic residues). The disordered stretch occupies residues 140 to 179 (DSRSLNTKKENKLKISNKDEQNKKFNQHRESNSFDLNHKK). The region spanning 364–533 (IRAPVVTIMG…LLQAEMLELK (170 aa)) is the tr-type G domain. A G1 region spans residues 373–380 (GHVDHGKT). 373 to 380 (GHVDHGKT) is a binding site for GTP. The segment at 398–402 (GITQN) is G2. A G3 region spans residues 419–422 (DTPG). Residues 419–423 (DTPGH) and 473–476 (NKID) each bind GTP. Residues 473-476 (NKID) are G4. The interval 509-511 (SAK) is G5.

It belongs to the TRAFAC class translation factor GTPase superfamily. Classic translation factor GTPase family. IF-2 subfamily.

It is found in the cytoplasm. In terms of biological role, one of the essential components for the initiation of protein synthesis. Protects formylmethionyl-tRNA from spontaneous hydrolysis and promotes its binding to the 30S ribosomal subunits. Also involved in the hydrolysis of GTP during the formation of the 70S ribosomal complex. This Buchnera aphidicola subsp. Acyrthosiphon pisum (strain Tuc7) protein is Translation initiation factor IF-2.